We begin with the raw amino-acid sequence, 340 residues long: Cell invasion protein SipD (340 aa).

2 disordered regions span residues M1–S26 and Q57–R76. The stretch at F291 to L319 forms a coiled coil.

It belongs to the invasin protein D family.

The protein resides in the secreted. In terms of biological role, required for translocation of effector proteins via the type III secretion system SPI-1, which is essential for an efficient bacterial internalization. Probably acts by modulating the secretion of SipA, SipB, and SipC. This chain is Cell invasion protein SipD (sipD), found in Salmonella typhi.